We begin with the raw amino-acid sequence, 126 residues long: Nascent polypeptide-associated complex protein (126 aa).

The NAC-A/B domain maps to 10 to 77; that stretch reads PRMMKQMQKM…AKKVAKEEEK (68 aa).

Belongs to the NAC-alpha family. As to quaternary structure, homodimer. Interacts with the ribosome. Binds ribosomal RNA.

Contacts the emerging nascent chain on the ribosome. This is Nascent polypeptide-associated complex protein from Methanococcus maripaludis (strain C7 / ATCC BAA-1331).